The primary structure comprises 734 residues: Photosystem I P700 chlorophyll a apoprotein A2 (734 aa).

8 helical membrane-spanning segments follow: residues 46–69, 135–158, 175–199, 273–291, 330–353, 369–395, 417–439, and 517–535; these read IFASHFGQLAIIFLWTSGNLFHVA, LYTGALFLLFLSAISLIAGWLHLQ, LNHHLSGLFGVSSLAWTGHLVHVAI, IAHHHLAIAFIFLVAGHMY, LHFQLGLALASLGVITSLVAQHMY, AALYTHHQYIAGFIMTGAFAHGAIFFI, AIISHLSWASLFLGFHTLGLYVH, and FLVHHAIALGLHTTTLILV. The [4Fe-4S] cluster site is built by cysteine 559 and cysteine 568. Helical transmembrane passes span 575-596 and 643-665; these read AFYLAVFWMLNTIGWVTFYWHW and LSVWAWMFLFGHLVWATGFMFLI. 3 residues coordinate chlorophyll a: histidine 654, methionine 662, and tyrosine 670. Tryptophan 671 provides a ligand contact to phylloquinone. Residues 707–727 traverse the membrane as a helical segment; that stretch reads LVGLAHFSVGYIFTYAAFLIA.

This sequence belongs to the PsaA/PsaB family. The PsaA/B heterodimer binds the P700 chlorophyll special pair and subsequent electron acceptors. PSI consists of a core antenna complex that captures photons, and an electron transfer chain that converts photonic excitation into a charge separation. The eukaryotic PSI reaction center is composed of at least 11 subunits. Requires P700 is a chlorophyll a/chlorophyll a' dimer, A0 is one or more chlorophyll a, A1 is one or both phylloquinones and FX is a shared 4Fe-4S iron-sulfur center. as cofactor.

It localises to the plastid. It is found in the chloroplast thylakoid membrane. The catalysed reaction is reduced [plastocyanin] + hnu + oxidized [2Fe-2S]-[ferredoxin] = oxidized [plastocyanin] + reduced [2Fe-2S]-[ferredoxin]. Its function is as follows. PsaA and PsaB bind P700, the primary electron donor of photosystem I (PSI), as well as the electron acceptors A0, A1 and FX. PSI is a plastocyanin-ferredoxin oxidoreductase, converting photonic excitation into a charge separation, which transfers an electron from the donor P700 chlorophyll pair to the spectroscopically characterized acceptors A0, A1, FX, FA and FB in turn. Oxidized P700 is reduced on the lumenal side of the thylakoid membrane by plastocyanin. This is Photosystem I P700 chlorophyll a apoprotein A2 from Solanum bulbocastanum (Wild potato).